We begin with the raw amino-acid sequence, 419 residues long: Endochitinase 2 (419 aa).

The signal sequence occupies residues 1 to 18 (MHHLRALVGVGLAGLAAG). A GH18 domain is found at 35 to 343 (AQNVVYWGQN…QQAKSILVNG (309 aa)). A glycan (N-linked (GlcNAc...) asparagine) is linked at N153. Catalysis depends on E173, which acts as the Proton donor. N-linked (GlcNAc...) asparagine glycans are attached at residues N237 and N256. The segment covering 350–381 (GPPSSTPATAPAPTATTMPSSTSVSSPAASPT) has biased composition (low complexity). The interval 350-386 (GPPSSTPATAPAPTATTMPSSTSVSSPAASPTGGTVP) is disordered. Residues 383–419 (GTVPQWGQCGGEGYSGPTQCVAPYQCVKQGDWWSSCR) enclose the CBM1 domain.

Belongs to the glycosyl hydrolase 18 family. Chitinase class III subfamily.

It localises to the secreted. It carries out the reaction Random endo-hydrolysis of N-acetyl-beta-D-glucosaminide (1-&gt;4)-beta-linkages in chitin and chitodextrins.. Secreted chitinase involved in the degradation of chitin, a component of the cell walls of fungi and exoskeletal elements of some animals (including worms and arthropods). Participates in the infection process and directly acts in the penetration process of the host cuticle. The protein is Endochitinase 2 (chi2) of Metarhizium robertsii (strain ARSEF 23 / ATCC MYA-3075) (Metarhizium anisopliae (strain ARSEF 23)).